A 150-amino-acid chain; its full sequence is Ribonuclease K6 (150 aa).

The first 23 residues, 1–23 (MVLCFPLLLLLLVLWGPVCPLHA), serve as a signal peptide directing secretion. His38 functions as the Proton acceptor in the catalytic mechanism. Cystine bridges form between Cys46/Cys104, Cys60/Cys114, Cys78/Cys129, and Cys85/Cys92. Substrate-binding positions include 61–65 (KHQNT) and Lys86. Residue Asn100 is glycosylated (N-linked (GlcNAc...) asparagine). Arg105 serves as a coordination point for substrate. The active-site Proton donor is His145.

The protein belongs to the pancreatic ribonuclease family. In terms of assembly, interacts (via N-terminus) with bacterial lipopolysaccharide (LPS).

The protein resides in the secreted. The protein localises to the lysosome. It localises to the cytoplasmic granule. Functionally, ribonuclease which shows a preference for the pyrimidines uridine and cytosine. Has potent antibacterial activity against a range of Gram-positive and Gram-negative bacteria, including P.aeruginosa, A.baumanii, M.luteus, S.aureus, E.faecalis, E.faecium, S.saprophyticus and E.coli. Causes loss of bacterial membrane integrity, and also promotes agglutination of Gram-negative bacteria. Probably contributes to urinary tract sterility. Bactericidal activity is independent of RNase activity. This chain is Ribonuclease K6 (RNASE6), found in Pan troglodytes (Chimpanzee).